A 537-amino-acid chain; its full sequence is Lariat debranching enzyme (537 aa).

A divalent metal cation-binding residues include cysteine 8, histidine 10, aspartate 39, and asparagine 84. The tract at residues 124 to 154 is lariat recognition loop; sequence SGIYKGHDFLRGHHEFPPYTESTCRSVYHVR. The a divalent metal cation site is built by histidine 174, histidine 226, and histidine 228. 2 disordered regions span residues 242-272 and 473-537; these read KAPT…SRLP and TAAE…EDDD. Over residues 251–260 the composition is skewed to low complexity; it reads SSSSSSSSSS.

It belongs to the lariat debranching enzyme family. The cofactor is Fe(2+). It depends on Zn(2+) as a cofactor. Requires Mn(2+) as cofactor.

It is found in the nucleus. With respect to regulation, active in presence of diverse metals including Fe(2+), Zn(2+), Mn(2+). Binds two metal cations in two adjacent alpha and beta metal-binding pockets. In terms of biological role, cleaves the 2'-5' phosphodiester linkage at the branch point of lariat intron pre-mRNAs after splicing and converts them into linear molecules that are subsequently degraded. It thereby facilitates ribonucleotide turnover. This Drosophila pseudoobscura pseudoobscura (Fruit fly) protein is Lariat debranching enzyme (DBR1).